Consider the following 624-residue polypeptide: D-3-phosphoglycerate dehydrogenase 2, chloroplastic (624 aa).

A chloroplast-targeting transit peptide spans 1–49 (MAFSSSCSSVKAVNSRWTSPSPSPSSRFAVLPAFLHRRYATSVKLTAIS). S71 is modified (phosphoserine). NAD(+)-binding positions include 231-232 (KV), D251, 310-312 (VAR), and D336. R312 is a catalytic residue. E341 is a catalytic residue. H360 acts as the Proton donor in catalysis. 360-363 (HLGA) provides a ligand contact to NAD(+). Residues 552-624 (LILCRQVDQP…AIEEFVFLKL (73 aa)) form the ACT domain.

This sequence belongs to the D-isomer specific 2-hydroxyacid dehydrogenase family. In terms of tissue distribution, ubiquitous, but highly expressed in roots and in dark-grown leaf tissues. Expressed in the vasculature, stigma, anther filaments and shoot apical meristem. Not detected in the root meristem or in embryo.

The protein resides in the plastid. It is found in the chloroplast. The enzyme catalyses (2R)-3-phosphoglycerate + NAD(+) = 3-phosphooxypyruvate + NADH + H(+). The protein operates within amino-acid biosynthesis; L-serine biosynthesis; L-serine from 3-phospho-D-glycerate: step 1/3. With respect to regulation, inhibited by 90 uM 3-phosphonooxypyruvate, but not by Ser, Thr, Val, Gly Trp, O-acetyl-L-Ser and Cys. In terms of biological role, involved in the plastidial phosphorylated pathway of serine biosynthesis (PPSB). The sequence is that of D-3-phosphoglycerate dehydrogenase 2, chloroplastic (PGDH2) from Arabidopsis thaliana (Mouse-ear cress).